A 372-amino-acid chain; its full sequence is Germination protease (372 aa).

The propeptide occupies 1–15; the sequence is MVKELNLEQYNVRTD.

The protein belongs to the peptidase A25 family. Homotetramer. Post-translationally, autoproteolytically processed. The inactive tetrameric zymogen termed p46 autoprocesses to a smaller form termed p41, which is active only during spore germination.

It catalyses the reaction Endopeptidase action with P4 Glu or Asp, P1 preferably Glu &gt; Asp, P1' hydrophobic and P2' Ala.. Functionally, initiates the rapid degradation of small, acid-soluble proteins during spore germination. This is Germination protease from Halalkalibacterium halodurans (strain ATCC BAA-125 / DSM 18197 / FERM 7344 / JCM 9153 / C-125) (Bacillus halodurans).